Reading from the N-terminus, the 467-residue chain is Asparagine--tRNA ligase (467 aa).

This sequence belongs to the class-II aminoacyl-tRNA synthetase family. As to quaternary structure, homodimer.

Its subcellular location is the cytoplasm. The catalysed reaction is tRNA(Asn) + L-asparagine + ATP = L-asparaginyl-tRNA(Asn) + AMP + diphosphate + H(+). This chain is Asparagine--tRNA ligase, found in Histophilus somni (strain 2336) (Haemophilus somnus).